We begin with the raw amino-acid sequence, 218 residues long: Protein-L-isoaspartate O-methyltransferase (218 aa).

Residue serine 69 is part of the active site.

The protein belongs to the methyltransferase superfamily. L-isoaspartyl/D-aspartyl protein methyltransferase family.

It localises to the cytoplasm. It catalyses the reaction [protein]-L-isoaspartate + S-adenosyl-L-methionine = [protein]-L-isoaspartate alpha-methyl ester + S-adenosyl-L-homocysteine. Functionally, catalyzes the methyl esterification of L-isoaspartyl residues in peptides and proteins that result from spontaneous decomposition of normal L-aspartyl and L-asparaginyl residues. It plays a role in the repair and/or degradation of damaged proteins. The sequence is that of Protein-L-isoaspartate O-methyltransferase from Aromatoleum aromaticum (strain DSM 19018 / LMG 30748 / EbN1) (Azoarcus sp. (strain EbN1)).